Reading from the N-terminus, the 280-residue chain is Protein YIP4b (280 aa).

A compositionally biased stretch (polar residues) spans 1 to 15 (MSHNDTIPLYQSSQS). Positions 1–106 (MSHNDTIPLY…SGFGSPPNTL (106 aa)) are disordered. Residues 1 to 146 (MSHNDTIPLY…DPGKALRDWD (146 aa)) are Cytoplasmic-facing. The helical transmembrane segment at 147-167 (LWGPFFFIVFLGLTLSWSASV) threads the bilayer. Over 168–171 (KKSE) the chain is Lumenal. A run of 2 helical transmembrane segments spans residues 172-192 (VFAV…LNVL) and 193-213 (LLGG…CLFP). Residues 214-230 (LDVGAVICMLKDNVILK) lie on the Lumenal side of the membrane. The helical transmembrane segment at 231-251 (MVVVSVTLAWSSWAAYPFMSA) threads the bilayer. The Cytoplasmic segment spans residues 252–258 (AVNPRRK). A helical transmembrane segment spans residues 259-279 (ALALYPVFLMYVSVGFLIIAI). Position 280 (N280) is a topological domain, lumenal.

Belongs to the YIP1 family. As to quaternary structure, homodimer and heterodimer with YIP4A. Component of a trans-Golgi network (TGN)-localized ECH/YIP4 complex made of ECH, YIP4A and YIP4B. Interacts directly with ECH. As to expression, expressed in developing root hair cells.

The protein resides in the golgi apparatus. It localises to the trans-Golgi network membrane. Together with YIP4A, involved in the regulation of cell elongation during root and hypocotyl growth. YIP4A and YIP4B are central trafficking components in Rho-of-plant (ROPs, e.g. ARAC4/ROP2, ARAC5/ROP4 and ARAC3/ROP6) small GTPases-dependent root hair formation, thus contributing to activation and plasma membrane accumulation of ROPs during hair initiation. The ECH/YIP4 complex is involved in the modulation of the trans-Golgi network (TGN)-mediated trafficking of some proteins and cell wall components (e.g. pectin and hemicellulose) to the cell wall in dark-grown hypocotyls and in secretory cells of the seed coat. This is Protein YIP4b from Arabidopsis thaliana (Mouse-ear cress).